The primary structure comprises 130 residues: Ribosome-binding factor A (130 aa).

The protein belongs to the RbfA family. In terms of assembly, monomer. Binds 30S ribosomal subunits, but not 50S ribosomal subunits or 70S ribosomes.

Its subcellular location is the cytoplasm. In terms of biological role, one of several proteins that assist in the late maturation steps of the functional core of the 30S ribosomal subunit. Associates with free 30S ribosomal subunits (but not with 30S subunits that are part of 70S ribosomes or polysomes). Required for efficient processing of 16S rRNA. May interact with the 5'-terminal helix region of 16S rRNA. The polypeptide is Ribosome-binding factor A (Pseudomonas aeruginosa (strain LESB58)).